Consider the following 301-residue polypeptide: Inactive C-alpha-formylglycine-generating enzyme 2 (301 aa).

Residues 1–25 form the signal peptide; that stretch reads MGISLSPLLTVLSLLSGRWLELGNG. Residues Cys156 and Cys290 are joined by a disulfide bond. Residue Asn191 is glycosylated (N-linked (GlcNAc...) asparagine). Ca(2+) contacts are provided by Asn194, Leu195, Asp208, Phe210, Asp229, Gly232, Val234, and Glu236. The segment covering 274–284 has biased composition (polar residues); the sequence is RMGNTPDSASD. The segment at 274–301 is disordered; the sequence is RMGNTPDSASDNLGFRCASGAGRPPGEL. The short motif at 298-301 is the Non-canonical ER retention motif element; sequence PGEL.

Belongs to the sulfatase-modifying factor family. Homodimer and heterodimer with SUMF1.

The protein resides in the endoplasmic reticulum lumen. Functionally, lacks formylglycine generating activity and is unable to convert newly synthesized inactive sulfatases to their active form. Inhibits the activation of sulfatases by SUMF1. In Bos taurus (Bovine), this protein is Inactive C-alpha-formylglycine-generating enzyme 2.